Reading from the N-terminus, the 453-residue chain is UDP-N-acetylmuramoylalanine--D-glutamate ligase (453 aa).

115–121 (GTNGKTT) contacts ATP.

It belongs to the MurCDEF family.

It is found in the cytoplasm. It carries out the reaction UDP-N-acetyl-alpha-D-muramoyl-L-alanine + D-glutamate + ATP = UDP-N-acetyl-alpha-D-muramoyl-L-alanyl-D-glutamate + ADP + phosphate + H(+). Its pathway is cell wall biogenesis; peptidoglycan biosynthesis. Cell wall formation. Catalyzes the addition of glutamate to the nucleotide precursor UDP-N-acetylmuramoyl-L-alanine (UMA). The polypeptide is UDP-N-acetylmuramoylalanine--D-glutamate ligase (Geotalea daltonii (strain DSM 22248 / JCM 15807 / FRC-32) (Geobacter daltonii)).